We begin with the raw amino-acid sequence, 225 residues long: Probable proteasome subunit beta type-6 (225 aa).

The protein belongs to the peptidase T1B family. The 26S proteasome consists of a 20S proteasome core and two 19S regulatory subunits. The 20S proteasome core is composed of 28 subunits that are arranged in four stacked rings, resulting in a barrel-shaped structure. The two end rings are each formed by seven alpha subunits, and the two central rings are each formed by seven beta subunits. The catalytic chamber with the active sites is on the inside of the barrel.

Its subcellular location is the cytoplasm. The protein resides in the nucleus. Non-catalytic component of the proteasome, a multicatalytic proteinase complex which is characterized by its ability to cleave peptides with Arg, Phe, Tyr, Leu, and Glu adjacent to the leaving group at neutral or slightly basic pH. The proteasome has an ATP-dependent proteolytic activity. This is Probable proteasome subunit beta type-6 (pam1) from Schizosaccharomyces pombe (strain 972 / ATCC 24843) (Fission yeast).